Here is a 584-residue protein sequence, read N- to C-terminus: Arginine--tRNA ligase (584 aa).

The short motif at 126–136 is the 'HIGH' region element; it reads PNIAKEMHVGH.

It belongs to the class-I aminoacyl-tRNA synthetase family. As to quaternary structure, monomer.

It localises to the cytoplasm. The catalysed reaction is tRNA(Arg) + L-arginine + ATP = L-arginyl-tRNA(Arg) + AMP + diphosphate. The chain is Arginine--tRNA ligase from Synechococcus elongatus (strain ATCC 33912 / PCC 7942 / FACHB-805) (Anacystis nidulans R2).